Consider the following 430-residue polypeptide: Adenylosuccinate synthetase (430 aa).

GTP is bound by residues 12 to 18 (GDEGKGK) and 40 to 42 (GHT). The active-site Proton acceptor is the aspartate 13. Residues aspartate 13 and glycine 40 each contribute to the Mg(2+) site. Residues 13–16 (DEGK), 38–41 (NAGH), threonine 128, arginine 142, glutamine 223, threonine 238, and arginine 302 each bind IMP. Histidine 41 serves as the catalytic Proton donor. 298-304 (TTTGRPR) is a substrate binding site. GTP is bound by residues arginine 304, 330 to 332 (LLD), and 412 to 414 (SVG).

Belongs to the adenylosuccinate synthetase family. As to quaternary structure, homodimer. Mg(2+) serves as cofactor.

It localises to the cytoplasm. It catalyses the reaction IMP + L-aspartate + GTP = N(6)-(1,2-dicarboxyethyl)-AMP + GDP + phosphate + 2 H(+). It functions in the pathway purine metabolism; AMP biosynthesis via de novo pathway; AMP from IMP: step 1/2. Its function is as follows. Plays an important role in the de novo pathway of purine nucleotide biosynthesis. Catalyzes the first committed step in the biosynthesis of AMP from IMP. This chain is Adenylosuccinate synthetase, found in Listeria monocytogenes serotype 4a (strain HCC23).